The following is a 186-amino-acid chain: Large ribosomal subunit protein uL6 (186 aa).

This sequence belongs to the universal ribosomal protein uL6 family. Part of the 50S ribosomal subunit.

Its function is as follows. This protein binds to the 23S rRNA, and is important in its secondary structure. It is located near the subunit interface in the base of the L7/L12 stalk, and near the tRNA binding site of the peptidyltransferase center. This chain is Large ribosomal subunit protein uL6, found in Hyperthermus butylicus (strain DSM 5456 / JCM 9403 / PLM1-5).